Consider the following 434-residue polypeptide: Serine--tRNA ligase (434 aa).

Residue 239 to 241 (TAE) coordinates L-serine. ATP is bound at residue 270–272 (RSE). L-serine is bound at residue E293. An ATP-binding site is contributed by 357–360 (EISS). S392 is an L-serine binding site.

It belongs to the class-II aminoacyl-tRNA synthetase family. Type-1 seryl-tRNA synthetase subfamily. As to quaternary structure, homodimer. The tRNA molecule binds across the dimer.

It localises to the cytoplasm. It catalyses the reaction tRNA(Ser) + L-serine + ATP = L-seryl-tRNA(Ser) + AMP + diphosphate + H(+). The catalysed reaction is tRNA(Sec) + L-serine + ATP = L-seryl-tRNA(Sec) + AMP + diphosphate + H(+). It functions in the pathway aminoacyl-tRNA biosynthesis; selenocysteinyl-tRNA(Sec) biosynthesis; L-seryl-tRNA(Sec) from L-serine and tRNA(Sec): step 1/1. Catalyzes the attachment of serine to tRNA(Ser). Is also able to aminoacylate tRNA(Sec) with serine, to form the misacylated tRNA L-seryl-tRNA(Sec), which will be further converted into selenocysteinyl-tRNA(Sec). This Cupriavidus taiwanensis (strain DSM 17343 / BCRC 17206 / CCUG 44338 / CIP 107171 / LMG 19424 / R1) (Ralstonia taiwanensis (strain LMG 19424)) protein is Serine--tRNA ligase.